The following is a 133-amino-acid chain: Small ribosomal subunit protein uS8 (133 aa).

Belongs to the universal ribosomal protein uS8 family. In terms of assembly, part of the 30S ribosomal subunit. Contacts proteins S5 and S12.

Functionally, one of the primary rRNA binding proteins, it binds directly to 16S rRNA central domain where it helps coordinate assembly of the platform of the 30S subunit. The protein is Small ribosomal subunit protein uS8 of Micrococcus luteus (Micrococcus lysodeikticus).